The primary structure comprises 223 residues: MAISASAGAAPVITIDGPTASGKGTIAHRVAKQLGWDVLDSGALYRLTALAALRRGLPATDEPAVAAVAQALDVRFDGPHVYLEGRDAGHEIRQEEVGNYASRIAAYPGVRQALLERQRAFRQPPGLVADGRDMGTVVFPDASLKIFLVADVEARAQRRCKQLIEKGISANLDDLLRDMRERDARDTQRAVAPLAPAADAHVLDSSGLTIEQTVQAVLDFWRA.

Position 17–25 (17–25 (GPTASGKGT)) interacts with ATP.

Belongs to the cytidylate kinase family. Type 1 subfamily.

It localises to the cytoplasm. It carries out the reaction CMP + ATP = CDP + ADP. The catalysed reaction is dCMP + ATP = dCDP + ADP. The polypeptide is Cytidylate kinase (Bordetella bronchiseptica (strain ATCC BAA-588 / NCTC 13252 / RB50) (Alcaligenes bronchisepticus)).